The chain runs to 106 residues: Halilectin 3, beta chain (106 aa).

A glycan (N-linked (GlcNAc...) asparagine) is linked at asparagine 65.

Probable heterotrimer consisting of an alpha chain and two beta chains. The alpha chain can probably have different glycosylation states. In terms of processing, glycosylated.

Functionally, lectin with affinity for N-acetyl-galactosamine, carragenan and glycoprotein porcine stomach mucin (PSM). Has metal-independent hemagglutinating activity towards erythrocytes from rabbit and human. Hemagglutinating activity is not inhibited by D-galactose, D-glucose, D-mannose, D-fucose, methyl-alpha-D-galactopyranoside, methyl-alpha-D-glucopyranoside, N-acetyl-glucosamine, N-acetyl-mannosamine, D-fructose, alpha-D-lactose, beta-D-lactose, D-lactulose, D-sucrose, fucoidan or glycoproteins thyroglobulin and ovalmucoid. This Haliclona caerulea (Blue Caribbean sponge) protein is Halilectin 3, beta chain.